The chain runs to 273 residues: 2-dehydro-3-deoxyphosphooctonate aldolase (273 aa).

The protein belongs to the KdsA family.

The protein resides in the cytoplasm. The catalysed reaction is D-arabinose 5-phosphate + phosphoenolpyruvate + H2O = 3-deoxy-alpha-D-manno-2-octulosonate-8-phosphate + phosphate. Its pathway is carbohydrate biosynthesis; 3-deoxy-D-manno-octulosonate biosynthesis; 3-deoxy-D-manno-octulosonate from D-ribulose 5-phosphate: step 2/3. It participates in bacterial outer membrane biogenesis; lipopolysaccharide biosynthesis. This is 2-dehydro-3-deoxyphosphooctonate aldolase from Nitratidesulfovibrio vulgaris (strain DP4) (Desulfovibrio vulgaris).